We begin with the raw amino-acid sequence, 222 residues long: MGKYMKKSKITGDISVMEVSKATAPSPGVRTRAAKTLALKRLNSSAADSALPNDSSCYLQLRSRRLEKPSSLIEPKQPPRVHRSGIKESGSRSRVDSVNSVPVAQSSNEDECFDNFVSVQVSCGENSLGFESRHSTRESTPCNFVEDMEIMVTPGSSTRSMCRATKEYTREQDNVIPTTSEMEEFFAYAEQQQQRLFMEKYNFDIVNDIPLSGRYEWVQVKP.

The tract at residues 68-101 (KPSSLIEPKQPPRVHRSGIKESGSRSRVDSVNSV) is disordered. Basic and acidic residues predominate over residues 85 to 95 (GIKESGSRSRV).

This sequence belongs to the CDI family. ICK/KRP subfamily. As to quaternary structure, specifically interacts with CDKA-1, but not with CDKB1-1.

The protein resides in the nucleus. Its subcellular location is the nucleoplasm. Functionally, binds and inhibits CYCD2-1/CDKA-1 complex kinase activity. May target specifically CDKA-1. The sequence is that of Cyclin-dependent kinase inhibitor 3 (KRP3) from Arabidopsis thaliana (Mouse-ear cress).